A 525-amino-acid polypeptide reads, in one-letter code: Mitogen-activated protein kinase kinase 5 (525 aa).

One can recognise a Protein kinase domain in the interval 59-317; the sequence is ETEGGFLGKG…CTELLRHPFI (259 aa). ATP-binding positions include 65-73 and Lys-88; that span reads LGKGSSGSV. The active-site Proton acceptor is the Asp-178. Over residues 358–367 the composition is skewed to low complexity; sequence SALPLASEGG. 2 disordered regions span residues 358–392 and 438–468; these read SALP…ERHD and SASV…AQHR.

Belongs to the protein kinase superfamily. STE Ser/Thr protein kinase family. MAP kinase kinase subfamily. Requires Mg(2+) as cofactor.

The catalysed reaction is L-tyrosyl-[protein] + ATP = O-phospho-L-tyrosyl-[protein] + ADP + H(+). It carries out the reaction L-seryl-[protein] + ATP = O-phospho-L-seryl-[protein] + ADP + H(+). It catalyses the reaction L-threonyl-[protein] + ATP = O-phospho-L-threonyl-[protein] + ADP + H(+). Functionally, protein kinase which phosphorylates and activates MPK4 in vitro. This Leishmania mexicana protein is Mitogen-activated protein kinase kinase 5.